An 805-amino-acid chain; its full sequence is Angiotensin-converting enzyme 2 (805 aa).

The first 17 residues, 1 to 17 (MSSSSWLLLSLVAVTAA), serve as a signal peptide directing secretion. Residues 18 to 740 (QSTIEEQAKT…LGPPNQPPVS (723 aa)) lie on the Extracellular side of the membrane. One can recognise a Peptidase M2 domain in the interval 19–607 (STIEEQAKTF…QNKNSFVGWS (589 aa)). The interaction with SARS-CoV spike glycoprotein stretch occupies residues 30 to 41 (DKFNHEAEDLFY). N-linked (GlcNAc...) asparagine glycosylation is present at N53. The interval 82–84 (MYP) is interaction with SARS-CoV spike glycoprotein. N-linked (GlcNAc...) asparagine glycans are attached at residues N90 and N103. C133 and C141 form a disulfide bridge. Chloride is bound at residue R169. R273 contributes to the substrate binding site. N322 carries an N-linked (GlcNAc...) asparagine glycan. Residues C344 and C361 are joined by a disulfide bond. 345 to 346 (HP) is a binding site for substrate. The interaction with SARS-CoV spike glycoprotein stretch occupies residues 353-357 (KGDFR). H374 is a Zn(2+) binding site. E375 (proton acceptor) is an active-site residue. Residues H378 and E402 each contribute to the Zn(2+) site. N-linked (GlcNAc...) asparagine glycosylation occurs at N432. 2 residues coordinate chloride: W477 and K481. The active-site Proton donor is the H505. Position 515 (Y515) interacts with substrate. C530 and C542 are oxidised to a cystine. N546 carries N-linked (GlcNAc...) asparagine glycosylation. The Collectrin-like domain occupies 614-805 (ADQSIKVRIS…QNTDDVQTSF (192 aa)). The tract at residues 652 to 659 (RQYFLKVK) is essential for cleavage by ADAM17. N690 carries an N-linked (GlcNAc...) asparagine glycan. Residues 697–716 (RTEVEKAIRMSRSRINDAFR) are essential for cleavage by TMPRSS11D and TMPRSS2. Residues 741 to 761 (IWLIVFGVVMGVIVVGIVILI) traverse the membrane as a helical segment. The Cytoplasmic portion of the chain corresponds to 762–805 (FTGIRDRKKKNKARSGENPYASIDISKGENNPGFQNTDDVQTSF). The disordered stretch occupies residues 772 to 805 (NKARSGENPYASIDISKGENNPGFQNTDDVQTSF). The short motif at 778-786 (ENPYASIDI) is the LIR element. Phosphotyrosine is present on Y781. The Endocytic sorting signal motif lies at 781-784 (YASI). Positions 781–785 (YASID) match the SH2-binding motif. Position 783 is a phosphoserine (S783). A Glycyl lysine isopeptide (Lys-Gly) (interchain with G-Cter in ubiquitin) cross-link involves residue K788. Residues 789–805 (GENNPGFQNTDDVQTSF) are compositionally biased toward polar residues. Residues 792–795 (NPGF) carry the PTB motif. The short motif at 803 to 805 (TSF) is the PDZ-binding element.

The protein belongs to the peptidase M2 family. Homodimer. Interacts with the catalytically active form of TMPRSS2. Interacts with SLC6A19; this interaction is essential for expression and function of SLC6A19 in intestine. Interacts with ITGA5:ITGB1. Probably interacts (via endocytic sorting signal motif) with AP2M1; the interaction is inhibited by phosphorylation of Tyr-781. Interacts (via PDZ-binding motif) with NHERF1 (via PDZ domains); the interaction may enhance ACE2 membrane residence. In terms of assembly, (Microbial infection) Interacts with SARS coronavirus/SARS-CoV spike protein. As to quaternary structure, (Microbial infection) Interacts with SARS coronavirus-2/SARS-CoV-2 spike protein (via RBD domain). (Microbial infection) Interacts with human coronavirus NL63 spike protein. In terms of assembly, (Microbial infection) Interacts with human coronavirus NL63/HCoV-NL63 spike glycoprotein. As to quaternary structure, (Microbial infection) Interacts with SARS coronavirus-2/SARS-CoV-2 spike protein; the interaction is increased by AVP/Arg-vasopressin with which they may form a complex. It depends on Zn(2+) as a cofactor. Chloride serves as cofactor. N-glycosylation on Asn-90 may limit SARS infectivity. Post-translationally, proteolytic cleavage by ADAM17 generates a secreted form. Also cleaved by serine proteases: TMPRSS2, TMPRSS11D and HPN/TMPRSS1. In terms of processing, phosphorylated. Phosphorylation at Tyr-781 probably inhibits interaction with AP2M1 and enables interactions with proteins containing SH2 domains. Ubiquitinated. Ubiquitinated on Lys-788 via 'Lys-48'-linked ubiquitin. 'Lys-48'-linked deubiquitinated by USP50 on the Lys-788; leading to its stabilization. In terms of tissue distribution, expressed in endothelial cells from small and large arteries, and in arterial smooth muscle cells (at protein level). Expressed in enterocytes of the small intestine, Leydig cells and Sertoli cells (at protein level). Expressed in the renal proximal tubule and the small intestine (at protein level). Expressed in heart, kidney, testis, and gastrointestinal system (at protein level). In lung, expressed at low levels in some alveolar type 2 cells, the expression seems to be individual-specific (at protein level). Expressed in nasal epithelial cells (at protein level). Coexpressed with TMPRSS2 within some lung alveolar type 2 cells, ileal absorptive enterocytes, intestinal epithelial cells, cornea, gallbladder and nasal goblet secretory cells. Coexpressed with TMPRSS4 within mature enterocytes. As to expression, expressed in nasal and bronchial epithelial cells (at protein level).

The protein localises to the secreted. The protein resides in the cell membrane. It localises to the cytoplasm. It is found in the cell projection. Its subcellular location is the cilium. The protein localises to the apical cell membrane. It carries out the reaction angiotensin II + H2O = angiotensin-(1-7) + L-phenylalanine. The catalysed reaction is angiotensin I + H2O = angiotensin-(1-9) + L-leucine. It catalyses the reaction bradykinin(1-8) + H2O = bradykinin(1-7) + L-phenylalanine. The enzyme catalyses neurotensin + H2O = neurotensin-(1-12) + L-leucine. It carries out the reaction neurotensin-(1-8) + H2O = neurotensin-(1-7) + L-arginine. The catalysed reaction is kinetensin + H2O = kinetensin-(1-8) + L-leucine. It catalyses the reaction dynorphin A-(1-13) + H2O = dynorphin A-(1-12) + L-lysine. The enzyme catalyses apelin-13 + H2O = apelin-12 + L-phenylalanine. It carries out the reaction [Pyr1]apelin-13 + H2O = [Pyr1]apelin-12 + L-phenylalanine. The catalysed reaction is apelin-17 + H2O = apelin-16 + L-phenylalanine. It catalyses the reaction beta-casomorphin-7 + H2O = beta-casomorphin-6 + L-isoleucine. The enzyme catalyses neocasomorphin + H2O = neocasomorphin-(1-5) + L-isoleucine. With respect to regulation, regulated by chloride and fluoride, but not bromide. Chloride increases angiotensin I and decreases angiotensin II cleavage. Inhibited by MLN-4760, cFP_Leu, and EDTA, but not by the ACE inhibitors lisinopril, captopril and enalaprilat. Highly potent and selective in vitro ACE2 inhibitors were identified. In terms of biological role, essential counter-regulatory carboxypeptidase of the renin-angiotensin hormone system that is a critical regulator of blood volume, systemic vascular resistance, and thus cardiovascular homeostasis. Converts angiotensin I to angiotensin 1-9, a nine-amino acid peptide with anti-hypertrophic effects in cardiomyocytes, and angiotensin II to angiotensin 1-7, which then acts as a beneficial vasodilator and anti-proliferation agent, counterbalancing the actions of the vasoconstrictor angiotensin II. Also removes the C-terminal residue from three other vasoactive peptides, neurotensin, kinetensin, and des-Arg bradykinin, but is not active on bradykinin. Also cleaves other biological peptides, such as apelins (apelin-13, [Pyr1]apelin-13, apelin-17, apelin-36), casomorphins (beta-casomorphin-7, neocasomorphin) and dynorphin A with high efficiency. In addition, ACE2 C-terminus is homologous to collectrin and is responsible for the trafficking of the neutral amino acid transporter SL6A19 to the plasma membrane of gut epithelial cells via direct interaction, regulating its expression on the cell surface and its catalytic activity. (Microbial infection) Acts as a receptor for human coronaviruses SARS-CoV and SARS-CoV-2, as well as human coronavirus NL63/HCoV-NL63. Its function is as follows. Non-functional as a carboxypeptidase. Functionally, (Microbial infection) Non-functional as a receptor for human coronavirus SARS-CoV-2. The polypeptide is Angiotensin-converting enzyme 2 (Homo sapiens (Human)).